A 430-amino-acid polypeptide reads, in one-letter code: Adenylosuccinate synthetase (430 aa).

GTP contacts are provided by residues 12 to 18 and 40 to 42; these read GDEGKGK and GHT. The Proton acceptor role is filled by Asp13. Mg(2+) contacts are provided by Asp13 and Gly40. IMP-binding positions include 13-16, 38-41, Thr130, Arg144, Gln224, Thr239, and Arg303; these read DEGK and NAGH. His41 functions as the Proton donor in the catalytic mechanism. Position 299-305 (299-305) interacts with substrate; that stretch reads TVTGRKR. GTP-binding positions include Arg305, 331–333, and 413–415; these read KLD and STS.

Belongs to the adenylosuccinate synthetase family. As to quaternary structure, homodimer. Mg(2+) is required as a cofactor.

The protein resides in the cytoplasm. The catalysed reaction is IMP + L-aspartate + GTP = N(6)-(1,2-dicarboxyethyl)-AMP + GDP + phosphate + 2 H(+). It functions in the pathway purine metabolism; AMP biosynthesis via de novo pathway; AMP from IMP: step 1/2. In terms of biological role, plays an important role in the de novo pathway of purine nucleotide biosynthesis. Catalyzes the first committed step in the biosynthesis of AMP from IMP. The protein is Adenylosuccinate synthetase of Parvibaculum lavamentivorans (strain DS-1 / DSM 13023 / NCIMB 13966).